The primary structure comprises 606 residues: NADH-ubiquinone oxidoreductase chain 5 (606 aa).

The residue at position 1 (M1) is an N-formylmethionine. A run of 15 helical transmembrane segments spans residues 4-24 (FSSLSLVTLLLLTMPIMMMSF), 43-63 (AFITSMIPTMMFIHSGQELII), 87-107 (MMFIPVALFVTWSIMEFSMWY), 117-137 (FFKYLLLFLITMLILVTANNL), 140-160 (LFIGWEGVGIMSFLLIGWWYG), 171-191 (AILYNRIGDIGFILAMAWFLT), 213-233 (LIGLALAATGKSAQFGLHPWL), 241-261 (TPVSALLHSSTMVVAGIFLLI), 273-293 (IQSITLCLGAITTLFTAMCAL), 310-330 (LGLMMVTIGINQPYLAFLHIC), 366-386 (MPFTTTALIVGSLALTGMPFL), 413-433 (LIATSFTAIYSTRIIFFALLG), 457-477 (LLIGSLFAGYIISNNIPPTTI), 482-502 (MPYYLKTTALIVTILGFILAL), and 582-602 (GLIKLYFLSFLITILISMILF).

As to quaternary structure, core subunit of respiratory chain NADH dehydrogenase (Complex I) which is composed of 45 different subunits.

The protein resides in the mitochondrion inner membrane. It carries out the reaction a ubiquinone + NADH + 5 H(+)(in) = a ubiquinol + NAD(+) + 4 H(+)(out). In terms of biological role, core subunit of the mitochondrial membrane respiratory chain NADH dehydrogenase (Complex I) which catalyzes electron transfer from NADH through the respiratory chain, using ubiquinone as an electron acceptor. Essential for the catalytic activity and assembly of complex I. The protein is NADH-ubiquinone oxidoreductase chain 5 (MT-ND5) of Bos taurus (Bovine).